Consider the following 224-residue polypeptide: Ribosome maturation factor RimM (224 aa).

Over residues 1-12 the composition is skewed to low complexity; the sequence is MARRPGSSSRGP. 2 disordered regions span residues 1 to 46 and 204 to 224; these read MARR…PSLV and VADPPEDLFAPPGPKPADDPG. The PRC barrel domain maps to 137–211; the sequence is EDEFFLTDLI…KVVADPPEDL (75 aa).

Belongs to the RimM family. As to quaternary structure, binds ribosomal protein uS19.

The protein localises to the cytoplasm. An accessory protein needed during the final step in the assembly of 30S ribosomal subunit, possibly for assembly of the head region. Essential for efficient processing of 16S rRNA. May be needed both before and after RbfA during the maturation of 16S rRNA. It has affinity for free ribosomal 30S subunits but not for 70S ribosomes. The sequence is that of Ribosome maturation factor RimM from Methylorubrum populi (strain ATCC BAA-705 / NCIMB 13946 / BJ001) (Methylobacterium populi).